Reading from the N-terminus, the 697-residue chain is Phenoloxidase 1 (697 aa).

Residues 1-101 constitute a propeptide, removed by PPAE1; it reads MSDMSGDVVE…PKHQEMATEV (101 aa). Cu cation contacts are provided by histidine 217, histidine 221, and histidine 247. N-linked (GlcNAc...) asparagine glycosylation is found at asparagine 260 and asparagine 313. The active-site Proton acceptor is glutamate 355. 3 residues coordinate Cu cation: histidine 370, histidine 374, and histidine 410. N-linked (GlcNAc...) asparagine glycans are attached at residues asparagine 498 and asparagine 552. Intrachain disulfides connect cysteine 587-cysteine 631 and cysteine 589-cysteine 638.

It belongs to the tyrosinase family. In terms of assembly, heterodimer. Requires Cu(2+) as cofactor. Post-translationally, activated by the cleavage of the N-terminal propeptide by PPAE1. In terms of tissue distribution, expressed in hemocytes.

It is found in the secreted. It carries out the reaction L-tyrosine + O2 = L-dopaquinone + H2O. The catalysed reaction is 2 L-dopa + O2 = 2 L-dopaquinone + 2 H2O. Activated by a cationic detergent cetyl pyridinium chloride (CPC). Inhibited by phenyl thio-urea (PTU). This is a copper-containing oxidase that functions in the formation of pigments such as melanins and other polyphenolic compounds. Catalyzes the rate-limiting conversions of tyrosine to DOPA, DOPA to DOPA-quinone and possibly 5,6 dihydroxyindole to indole-5'6 quinone. Catalyzes the oxidation of 4-methylcatechol. Binds to the surface of hemocytes and is involved in hemocyte melanization. This chain is Phenoloxidase 1, found in Spodoptera litura (Asian cotton leafworm).